The following is a 362-amino-acid chain: Atypical chemokine receptor 3 (362 aa).

The Extracellular portion of the chain corresponds to 1–47; the sequence is MDVHLFDYVEPGNYSDINWPCNSSDCIVVDTVQCPAMPNKNVLLYTL. N-linked (GlcNAc...) asparagine glycosylation is found at asparagine 13 and asparagine 22. Residues 48 to 68 traverse the membrane as a helical segment; the sequence is SFIYIFIFVIGMIANSVVVWV. The Cytoplasmic segment spans residues 69–81; the sequence is NIQAKTTGYDTHC. A helical transmembrane segment spans residues 82–102; sequence YILNLAIADLWVVITIPVWVV. Residues 103–118 are Extracellular-facing; that stretch reads SLVQHNQWPMGELTCK. Cysteine 117 and cysteine 196 are disulfide-bonded. A helical transmembrane segment spans residues 119 to 139; it reads ITHLIFSINLFGSIFFLACMS. At 140-162 the chain is on the cytoplasmic side; it reads VDRYLSITYFTSTSSYKKKMVRR. A helical transmembrane segment spans residues 163-183; that stretch reads VVCVLVWLLAFFVSLPDTYYL. Residues 184–213 are Extracellular-facing; it reads KTVTSASNNETYCRSFYPEHSIKEWLIGME. Residues 214–234 form a helical membrane-spanning segment; that stretch reads LVSVILGFAVPFTIIAIFYFL. Topologically, residues 235–252 are cytoplasmic; that stretch reads LARAMSASGDQEKHSSRK. The helical transmembrane segment at 253–273 threads the bilayer; the sequence is IIFSYVVVFLVCWLPYHFVVL. The Extracellular segment spans residues 274-296; that stretch reads LDIFSILHYIPFTCQLENVLFTA. Residues 297–319 traverse the membrane as a helical segment; the sequence is LHVTQCLSLVHCCVNPVLYSFIN. Residues 320-362 lie on the Cytoplasmic side of the membrane; sequence RNYRYELMKAFIFKYSAKTGLTKLIDASRVSETEYSALEQNTK. The C-terminal cytoplasmic tail stretch occupies residues 324–362; the sequence is YELMKAFIFKYSAKTGLTKLIDASRVSETEYSALEQNTK. Residues serine 347, serine 350, and serine 355 each carry the phosphoserine modification.

Belongs to the G-protein coupled receptor 1 family. Atypical chemokine receptor subfamily. In terms of assembly, homodimer. Can form heterodimers with CXCR4; heterodimerization may regulate CXCR4 signaling activity. Interacts with ARRB1 and ARRB2. The Ser/Thr residues in the C-terminal cytoplasmic tail may be phosphorylated. In terms of processing, ubiquitinated at the Lys residues in its C-terminal cytoplasmic tail and is essential for correct trafficking from and to the cell membrane. Deubiquitinated by CXCL12-stimulation in a reversible manner. In terms of tissue distribution, expressed in vascular smooth muscle cells (at protein level). In brain, expressed in blood vessels, pyramidal cells in hippocampal subfield CA3, mature dentate gyrus granule cells, ventricle walls, olfactory bulb, accumbens shell, supraoptic, lateroanterior and ventromedial hypothalamic nuclei, medial region of thalamus, and motor nuclei, central gray and raphe magnus nucleus of brain stem. Detected in primary neurons, GABAergic neurons, astrocytes, cerebral cortex, ventral striatum and choroid plexus. Not detected in mesencephalon.

It localises to the cell membrane. The protein localises to the early endosome. Its subcellular location is the recycling endosome. Atypical chemokine receptor that controls chemokine levels and localization via high-affinity chemokine binding that is uncoupled from classic ligand-driven signal transduction cascades, resulting instead in chemokine sequestration, degradation, or transcytosis. Also known as interceptor (internalizing receptor) or chemokine-scavenging receptor or chemokine decoy receptor. Acts as a receptor for chemokines CXCL11 and CXCL12/SDF1. Chemokine binding does not activate G-protein-mediated signal transduction but instead induces beta-arrestin recruitment, leading to ligand internalization and activation of MAPK signaling pathway. Required for regulation of CXCR4 protein levels in migrating interneurons, thereby adapting their chemokine responsiveness. In glioma cells, transduces signals via MEK/ERK pathway, mediating resistance to apoptosis. Promotes cell growth and survival. Not involved in cell migration, adhesion or proliferation of normal hematopoietic progenitors but activated by CXCL11 in malignant hemapoietic cells, leading to phosphorylation of ERK1/2 (MAPK3/MAPK1) and enhanced cell adhesion and migration. Plays a regulatory role in CXCR4-mediated activation of cell surface integrins by CXCL12. Required for heart valve development. Its function is as follows. Atypical chemokine receptor that controls chemokine levels and localization via high-affinity chemokine binding that is uncoupled from classic ligand-driven signal transduction cascades, resulting instead in chemokine sequestration, degradation, or transcytosis. Also known as interceptor (internalizing receptor) or chemokine-scavenging receptor or chemokine decoy receptor. Acts as a receptor for chemokines CXCL11 and CXCL12/SDF1. Chemokine binding does not activate G-protein-mediated signal transduction but instead induces beta-arrestin recruitment, leading to ligand internalization and activation of MAPK signaling pathway. Required for regulation of CXCR4 protein levels in migrating interneurons, thereby adapting their chemokine responsiveness. In glioma cells, transduces signals via MEK/ERK pathway, mediating resistance to apoptosis. Promotes cell growth and survival. Not involved in cell migration, adhesion or proliferation of normal hematopoietic progenitors but activated by CXCL11 in malignant hemapoietic cells, leading to phosphorylation of ERK1/2 (MAPK3/MAPK1) and enhanced cell adhesion and migration. Plays a regulatory role in CXCR4-mediated activation of cell surface integrins by CXCL12. Required for heart valve development. Regulates axon guidance in the oculomotor system through the regulation of CXCL12 levels. This is Atypical chemokine receptor 3 from Rattus norvegicus (Rat).